A 762-amino-acid polypeptide reads, in one-letter code: Ribosome-releasing factor 2, mitochondrial (762 aa).

A mitochondrion-targeting transit peptide spans 1–35 (MLLSLTFPVLRGCTGHLVNRSLQAPRWRVTWKRSY). One can recognise a tr-type G domain in the interval 54–341 (SKIRNIGIMA…AITAYLPAPN (288 aa)). Residues 63-70 (AHIDAGKT), 127-131 (DTPGH), and 181-184 (NKMD) each bind GTP.

This sequence belongs to the TRAFAC class translation factor GTPase superfamily. Classic translation factor GTPase family. EF-G/EF-2 subfamily.

It is found in the mitochondrion. The catalysed reaction is GTP + H2O = GDP + phosphate + H(+). Mitochondrial GTPase that mediates the disassembly of ribosomes from messenger RNA at the termination of mitochondrial protein biosynthesis. Acts in collaboration with mrrf. GTP hydrolysis follows the ribosome disassembly and probably occurs on the ribosome large subunit. Not involved in the GTP-dependent ribosomal translocation step during translation elongation. The protein is Ribosome-releasing factor 2, mitochondrial (gfm2) of Danio rerio (Zebrafish).